The primary structure comprises 155 residues: DNA gyrase inhibitor (155 aa).

The protein belongs to the DNA gyrase inhibitor family. In terms of assembly, interacts with DNA gyrase.

It is found in the cytoplasm. Its function is as follows. Inhibits the supercoiling activity of DNA gyrase. Acts by inhibiting DNA gyrase at an early step, prior to (or at the step of) binding of DNA by the gyrase. It protects cells against toxins that target DNA gyrase, by inhibiting activity of these toxins and reducing the formation of lethal double-strand breaks in the cell. The sequence is that of DNA gyrase inhibitor from Escherichia fergusonii (strain ATCC 35469 / DSM 13698 / CCUG 18766 / IAM 14443 / JCM 21226 / LMG 7866 / NBRC 102419 / NCTC 12128 / CDC 0568-73).